A 254-amino-acid polypeptide reads, in one-letter code: RNA polymerase sigma-D factor (254 aa).

Residues 54-67 (DLMSLGMLGLYDAL) carry the Polymerase core binding motif. Residues 220-239 (LTEIGQVLNLSTSRISQIHS) constitute a DNA-binding region (H-T-H motif).

As to quaternary structure, monomer. Interacts transiently with the RNAP core.

Its function is as follows. Sigma factors are initiation factors that promote the attachment of RNA polymerase (RNAP) to specific initiation sites and are then released. This alternative sigma factor is required for the transcription of the flagellin and motility genes as well as for wild-type chemotaxis. Associates with the RNAP core during all growth phases with a peak at the transition to stationary phase. The protein is RNA polymerase sigma-D factor (sigD) of Bacillus subtilis (strain 168).